The chain runs to 376 residues: Homoserine dehydrogenase (376 aa).

NADP(+)-binding residues include N17 and I18. An NAD(+)-binding site is contributed by I18. NADPH is bound by residues I18, K67, T99, and K123. Positions 99 and 123 each coordinate NADP(+). Residue T99 coordinates NAD(+). Residues E150, V153, A155, and L157 each coordinate Na(+). S201 is subject to Phosphoserine. Residues G213 and E216 each contribute to the NADP(+) site. L-homoserine is bound by residues E216 and D227. Catalysis depends on K231, which acts as the Proton donor. G349 is a binding site for NADP(+). An NAD(+)-binding site is contributed by G349. G349 contacts NADPH.

Belongs to the homoserine dehydrogenase family. The cofactor is a metal cation.

The catalysed reaction is L-homoserine + NADP(+) = L-aspartate 4-semialdehyde + NADPH + H(+). It carries out the reaction L-homoserine + NAD(+) = L-aspartate 4-semialdehyde + NADH + H(+). The protein operates within amino-acid biosynthesis; L-methionine biosynthesis via de novo pathway; L-homoserine from L-aspartate: step 3/3. It participates in amino-acid biosynthesis; L-threonine biosynthesis; L-threonine from L-aspartate: step 3/5. Its function is as follows. Catalyzes the conversion of L-aspartate-beta-semialdehyde (L-Asa) to L-homoserine (L-Hse), the third step in the biosynthesis of amino acids that derive from aspartate (the aspartate family of amino acids), including methioinine and threonine, the latter of which is a precursor to isoleucine; production of homoserine leads to a branch-point in the pathway as it can either be O-phosphorylated for processing to threonine, or O-acylated for processing to methionine. In Schizosaccharomyces pombe (strain 972 / ATCC 24843) (Fission yeast), this protein is Homoserine dehydrogenase.